The following is a 132-amino-acid chain: Small ribosomal subunit protein uS11 (132 aa).

Belongs to the universal ribosomal protein uS11 family. Part of the 30S ribosomal subunit. Interacts with proteins S7 and S18. Binds to IF-3.

Functionally, located on the platform of the 30S subunit, it bridges several disparate RNA helices of the 16S rRNA. Forms part of the Shine-Dalgarno cleft in the 70S ribosome. This is Small ribosomal subunit protein uS11 from Chlamydia muridarum (strain MoPn / Nigg).